The following is a 121-amino-acid chain: Large ribosomal subunit protein eL34B (121 aa).

The protein belongs to the eukaryotic ribosomal protein eL34 family. Component of the large ribosomal subunit (LSU). Mature yeast ribosomes consist of a small (40S) and a large (60S) subunit. The 40S small subunit contains 1 molecule of ribosomal RNA (18S rRNA) and 33 different proteins (encoded by 57 genes). The large 60S subunit contains 3 rRNA molecules (25S, 5.8S and 5S rRNA) and 46 different proteins (encoded by 81 genes).

It localises to the cytoplasm. Component of the ribosome, a large ribonucleoprotein complex responsible for the synthesis of proteins in the cell. The small ribosomal subunit (SSU) binds messenger RNAs (mRNAs) and translates the encoded message by selecting cognate aminoacyl-transfer RNA (tRNA) molecules. The large subunit (LSU) contains the ribosomal catalytic site termed the peptidyl transferase center (PTC), which catalyzes the formation of peptide bonds, thereby polymerizing the amino acids delivered by tRNAs into a polypeptide chain. The nascent polypeptides leave the ribosome through a tunnel in the LSU and interact with protein factors that function in enzymatic processing, targeting, and the membrane insertion of nascent chains at the exit of the ribosomal tunnel. The polypeptide is Large ribosomal subunit protein eL34B (Saccharomyces cerevisiae (strain ATCC 204508 / S288c) (Baker's yeast)).